Here is a 563-residue protein sequence, read N- to C-terminus: DNA mismatch repair protein MutL (563 aa).

The protein belongs to the DNA mismatch repair MutL/HexB family.

Functionally, this protein is involved in the repair of mismatches in DNA. It is required for dam-dependent methyl-directed DNA mismatch repair. May act as a 'molecular matchmaker', a protein that promotes the formation of a stable complex between two or more DNA-binding proteins in an ATP-dependent manner without itself being part of a final effector complex. In Trichormus variabilis (strain ATCC 29413 / PCC 7937) (Anabaena variabilis), this protein is DNA mismatch repair protein MutL.